Consider the following 443-residue polypeptide: Xaa-Pro dipeptidase (443 aa).

Mn(2+) contacts are provided by D248, D259, H339, E384, and E423.

The protein belongs to the peptidase M24B family. Bacterial-type prolidase subfamily. Mn(2+) serves as cofactor.

It catalyses the reaction Xaa-L-Pro dipeptide + H2O = an L-alpha-amino acid + L-proline. Functionally, splits dipeptides with a prolyl residue in the C-terminal position. The polypeptide is Xaa-Pro dipeptidase (Colwellia psychrerythraea (strain 34H / ATCC BAA-681) (Vibrio psychroerythus)).